Consider the following 127-residue polypeptide: MNIRATRVGEQMKKELSDIISRRLKDPRIGFVTVTDVRVTGDLQQAKVYISVLGDDKQRENTLKALEKAKGFIRSEIGQRIRLRKTPEIFFEIDETMEYGSRIEQLIRQISSDDHPAKEADGEPNNG.

The protein belongs to the RbfA family. As to quaternary structure, monomer. Binds 30S ribosomal subunits, but not 50S ribosomal subunits or 70S ribosomes.

The protein resides in the cytoplasm. In terms of biological role, one of several proteins that assist in the late maturation steps of the functional core of the 30S ribosomal subunit. Associates with free 30S ribosomal subunits (but not with 30S subunits that are part of 70S ribosomes or polysomes). Required for efficient processing of 16S rRNA. May interact with the 5'-terminal helix region of 16S rRNA. The sequence is that of Ribosome-binding factor A from Geobacillus kaustophilus (strain HTA426).